The following is a 236-amino-acid chain: CD81 antigen (236 aa).

The Cytoplasmic portion of the chain corresponds to methionine 1–tyrosine 12. The helical transmembrane segment at leucine 13–leucine 33 threads the bilayer. Over tryptophan 34–tyrosine 63 the chain is Extracellular. A helical membrane pass occupies residues isoleucine 64 to isoleucine 84. Over glutamine 85 to cysteine 89 the chain is Cytoplasmic. A helical membrane pass occupies residues leucine 90–glycine 112. Over phenylalanine 113–lysine 201 the chain is Extracellular. 2 disulfides stabilise this stretch: cysteine 156–cysteine 190 and cysteine 157–cysteine 175. A helical membrane pass occupies residues leucine 202–methionine 224. Glutamate 219 contributes to the cholesterol binding site. The Cytoplasmic segment spans residues valine 225–tyrosine 236.

It belongs to the tetraspanin (TM4SF) family. In terms of assembly, homodimer. Part of a complex composed of CD19, CR2/CD21, CD81 and IFITM1/CD225 in the membrane of mature B cells. Interacts (via the second extracellular domain) with CD19; this interaction is initiated early during biosynthesis in the ER and enables trafficking of only properly folded CD19. Part of a complex that includes MHC class II/HLA-DR molecules and IFITM1. Interacts with IFITM1. Interacts with IFITM2 and IFITM3. Part of integrin-tetraspanin complex composed of CD9, CD81, beta-1 and beta-2 integrins in the membrane of monocyte/macrophages. Interacts (via the second extracellular domain) with integrin ITGAV:ITGB3. Interacts with CD247/CD3 zeta, ICAM1 and CD9 at the immune synapse on T cell membrane. Part of a GPCR-tetraspanin complex consisting at least of ADGRG1, CD81, possibly CD9, and GNA11 in which CD81 enhances the association of ADGRG1 with GNA11. Part of a complex composed of CD9, CD81, PTGFRN and IGSF8. Interacts directly with IGSF8. Interacts with CD53 and SCIMP. Interacts with SAMHD1 (via its C-terminus). Interacts with glypican GPC3 and with the transcriptional repressor HHEX; binding to GPC3 decreases the availability of free CD81 for binding to HHEX, resulting in nuclear translocation of HHEX and transcriptional repression. Interacts with CLDN1. Interacts with CLDN6 and CLDN9. Not glycosylated. Post-translationally, likely constitutively palmitoylated at low levels. Protein palmitoylation is up-regulated upon coligation of BCR and CD9-C2R-CD81 complexes in lipid rafts.

The protein resides in the cell membrane. It is found in the basolateral cell membrane. Functionally, structural component of specialized membrane microdomains known as tetraspanin-enriched microdomains (TERMs), which act as platforms for receptor clustering and signaling. Essential for trafficking and compartmentalization of CD19 receptor on the surface of activated B cells. Upon initial encounter with microbial pathogens, enables the assembly of CD19-CR2/CD21 and B cell receptor (BCR) complexes at signaling TERMs, lowering the threshold dose of antigen required to trigger B cell clonal expansion and antibody production. In T cells, facilitates the localization of CD247/CD3 zeta at antigen-induced synapses with B cells, providing for costimulation and polarization toward T helper type 2 phenotype. Present in MHC class II compartments, may also play a role in antigen presentation. Can act both as positive and negative regulator of homotypic or heterotypic cell-cell fusion processes. Positively regulates sperm-egg fusion and may be involved in acrosome reaction. In myoblasts, associates with CD9 and PTGFRN and inhibits myotube fusion during muscle regeneration. In macrophages, associates with CD9 and beta-1 and beta-2 integrins, and prevents macrophage fusion into multinucleated giant cells specialized in ingesting complement-opsonized large particles. Also prevents the fusion of mononuclear cell progenitors into osteoclasts in charge of bone resorption. May regulate the compartmentalization of enzymatic activities. In T cells, defines the subcellular localization of dNTPase SAMHD1 and permits its degradation by the proteasome, thereby controlling intracellular dNTP levels. Also involved in cell adhesion and motility. Positively regulates integrin-mediated adhesion of macrophages, particularly relevant for the inflammatory response in the lung. This Rattus norvegicus (Rat) protein is CD81 antigen (Cd81).